The chain runs to 37 residues: Esculentin-2JDb (37 aa).

An intrachain disulfide couples Cys31 to Cys37.

Expressed by the skin glands.

It localises to the secreted. In terms of biological role, has antibacterial activity against E.coli and S.aureus strains. The polypeptide is Esculentin-2JDb (Odorrana jingdongensis (Jingdong frog)).